A 293-amino-acid polypeptide reads, in one-letter code: ATP synthase gamma chain (293 aa).

It belongs to the ATPase gamma chain family. In terms of assembly, F-type ATPases have 2 components, CF(1) - the catalytic core - and CF(0) - the membrane proton channel. CF(1) has five subunits: alpha(3), beta(3), gamma(1), delta(1), epsilon(1). CF(0) has three main subunits: a, b and c.

Its subcellular location is the cell inner membrane. Produces ATP from ADP in the presence of a proton gradient across the membrane. The gamma chain is believed to be important in regulating ATPase activity and the flow of protons through the CF(0) complex. This is ATP synthase gamma chain from Nitrosospira multiformis (strain ATCC 25196 / NCIMB 11849 / C 71).